The following is a 207-amino-acid chain: Holliday junction branch migration complex subunit RuvA (207 aa).

The domain I stretch occupies residues 1–63; sequence MIDSLHGEVL…DDGIDLYAFE (63 aa). Residues 64 to 142 are domain II; the sequence is SDEARQMFAM…VFDSGDSASE (79 aa). The segment at 143 to 154 is flexible linker; the sequence is PQSGVGGNSEAE. Residues 155 to 207 are domain III; sequence VDSGVVGTVTQALVELGFPEKQAEKTATSAAAEGGSVSEILKRALRSMSSERN.

Belongs to the RuvA family. In terms of assembly, homotetramer. Forms an RuvA(8)-RuvB(12)-Holliday junction (HJ) complex. HJ DNA is sandwiched between 2 RuvA tetramers; dsDNA enters through RuvA and exits via RuvB. An RuvB hexamer assembles on each DNA strand where it exits the tetramer. Each RuvB hexamer is contacted by two RuvA subunits (via domain III) on 2 adjacent RuvB subunits; this complex drives branch migration. In the full resolvosome a probable DNA-RuvA(4)-RuvB(12)-RuvC(2) complex forms which resolves the HJ.

Its subcellular location is the cytoplasm. The RuvA-RuvB-RuvC complex processes Holliday junction (HJ) DNA during genetic recombination and DNA repair, while the RuvA-RuvB complex plays an important role in the rescue of blocked DNA replication forks via replication fork reversal (RFR). RuvA specifically binds to HJ cruciform DNA, conferring on it an open structure. The RuvB hexamer acts as an ATP-dependent pump, pulling dsDNA into and through the RuvAB complex. HJ branch migration allows RuvC to scan DNA until it finds its consensus sequence, where it cleaves and resolves the cruciform DNA. The sequence is that of Holliday junction branch migration complex subunit RuvA from Corynebacterium kroppenstedtii (strain DSM 44385 / JCM 11950 / CIP 105744 / CCUG 35717).